Consider the following 77-residue polypeptide: Acyl carrier protein (77 aa).

Positions 2 to 77 (AEVFDRVKEI…DAVDYINSKA (76 aa)) constitute a Carrier domain. S37 carries the post-translational modification O-(pantetheine 4'-phosphoryl)serine.

This sequence belongs to the acyl carrier protein (ACP) family. In terms of processing, 4'-phosphopantetheine is transferred from CoA to a specific serine of apo-ACP by AcpS. This modification is essential for activity because fatty acids are bound in thioester linkage to the sulfhydryl of the prosthetic group.

The protein resides in the cytoplasm. Its pathway is lipid metabolism; fatty acid biosynthesis. Functionally, carrier of the growing fatty acid chain in fatty acid biosynthesis. In Oceanobacillus iheyensis (strain DSM 14371 / CIP 107618 / JCM 11309 / KCTC 3954 / HTE831), this protein is Acyl carrier protein.